The following is a 226-amino-acid chain: Ribosomal RNA small subunit methyltransferase G (226 aa).

S-adenosyl-L-methionine is bound by residues Gly-95, Leu-100, 146–147 (VE), and Arg-159.

Belongs to the methyltransferase superfamily. RNA methyltransferase RsmG family.

It localises to the cytoplasm. The enzyme catalyses guanosine(527) in 16S rRNA + S-adenosyl-L-methionine = N(7)-methylguanosine(527) in 16S rRNA + S-adenosyl-L-homocysteine. Its function is as follows. Specifically methylates the N7 position of guanine in position 527 of 16S rRNA. This Acidovorax sp. (strain JS42) protein is Ribosomal RNA small subunit methyltransferase G.